A 1071-amino-acid polypeptide reads, in one-letter code: Carbamoyl phosphate synthase large chain (1071 aa).

The segment at 1–403 (MPKRTDLKSI…SFQKALRGLE (403 aa)) is carboxyphosphate synthetic domain. Positions 133-328 (KEAMEKIGLS…IAKVAANWAV (196 aa)) constitute an ATP-grasp 1 domain. The ATP site is built by Arg-169, Gly-175, Gly-176, Gln-208, Val-210, Glu-215, Gly-241, Val-242, His-243, Gln-285, and Glu-299. Gln-285, Glu-299, and Asn-301 together coordinate Mg(2+). Mn(2+) contacts are provided by Gln-285, Glu-299, and Asn-301. The interval 404-548 (TGLCGFNPAR…YSTYEEECES (145 aa)) is oligomerization domain. Residues 549 to 930 (RPSDRKKVMI…AYYKAQLGAG (382 aa)) form a carbamoyl phosphate synthetic domain region. An ATP-grasp 2 domain is found at 673 to 864 (QKVLNDLGLR…LAKVGARCMA (192 aa)). The ATP site is built by Arg-709, Phe-748, Leu-750, Glu-755, Gly-780, Ile-781, His-782, Ser-783, Gln-823, and Glu-835. Gln-823, Glu-835, and Asn-837 together coordinate Mg(2+). Mn(2+) contacts are provided by Gln-823, Glu-835, and Asn-837. The MGS-like domain occupies 931 to 1071 (ERLNPTGKIF…ELHGRLKNRN (141 aa)). The tract at residues 931-1071 (ERLNPTGKIF…ELHGRLKNRN (141 aa)) is allosteric domain.

Belongs to the CarB family. Composed of two chains; the small (or glutamine) chain promotes the hydrolysis of glutamine to ammonia, which is used by the large (or ammonia) chain to synthesize carbamoyl phosphate. Tetramer of heterodimers (alpha,beta)4. Requires Mg(2+) as cofactor. Mn(2+) serves as cofactor.

The catalysed reaction is hydrogencarbonate + L-glutamine + 2 ATP + H2O = carbamoyl phosphate + L-glutamate + 2 ADP + phosphate + 2 H(+). It carries out the reaction hydrogencarbonate + NH4(+) + 2 ATP = carbamoyl phosphate + 2 ADP + phosphate + 2 H(+). It participates in amino-acid biosynthesis; L-arginine biosynthesis; carbamoyl phosphate from bicarbonate: step 1/1. Its pathway is pyrimidine metabolism; UMP biosynthesis via de novo pathway; (S)-dihydroorotate from bicarbonate: step 1/3. Large subunit of the glutamine-dependent carbamoyl phosphate synthetase (CPSase). CPSase catalyzes the formation of carbamoyl phosphate from the ammonia moiety of glutamine, carbonate, and phosphate donated by ATP, constituting the first step of 2 biosynthetic pathways, one leading to arginine and/or urea and the other to pyrimidine nucleotides. The large subunit (synthetase) binds the substrates ammonia (free or transferred from glutamine from the small subunit), hydrogencarbonate and ATP and carries out an ATP-coupled ligase reaction, activating hydrogencarbonate by forming carboxy phosphate which reacts with ammonia to form carbamoyl phosphate. In Neisseria gonorrhoeae, this protein is Carbamoyl phosphate synthase large chain.